Here is a 472-residue protein sequence, read N- to C-terminus: Ribosomal protein uS12 methylthiotransferase RimO (472 aa).

One can recognise an MTTase N-terminal domain in the interval 33–143 (NRIGFVSLGC…VLKHVHKYVP (111 aa)). [4Fe-4S] cluster is bound by residues Cys-42, Cys-78, Cys-107, Cys-175, Cys-179, and Cys-182. The region spanning 161–398 (LTPKHYAYLK…MEVQAEISAE (238 aa)) is the Radical SAM core domain. The region spanning 401–467 (ARFVGRTLDI…EHDLWAEVVD (67 aa)) is the TRAM domain.

The protein belongs to the methylthiotransferase family. RimO subfamily. It depends on [4Fe-4S] cluster as a cofactor.

Its subcellular location is the cytoplasm. It carries out the reaction L-aspartate(89)-[ribosomal protein uS12]-hydrogen + (sulfur carrier)-SH + AH2 + 2 S-adenosyl-L-methionine = 3-methylsulfanyl-L-aspartate(89)-[ribosomal protein uS12]-hydrogen + (sulfur carrier)-H + 5'-deoxyadenosine + L-methionine + A + S-adenosyl-L-homocysteine + 2 H(+). Catalyzes the methylthiolation of an aspartic acid residue of ribosomal protein uS12. This Shewanella baltica (strain OS155 / ATCC BAA-1091) protein is Ribosomal protein uS12 methylthiotransferase RimO.